A 150-amino-acid polypeptide reads, in one-letter code: Large ribosomal subunit protein uL11 (150 aa).

The disordered stretch occupies residues 83-111 (AAGLKPQGKRNRAKGSEKPGRQTAGTVTA).

The protein belongs to the universal ribosomal protein uL11 family. As to quaternary structure, part of the ribosomal stalk of the 50S ribosomal subunit. Interacts with L10 and the large rRNA to form the base of the stalk. L10 forms an elongated spine to which L12 dimers bind in a sequential fashion forming a multimeric L10(L12)X complex. Post-translationally, one or more lysine residues are methylated.

In terms of biological role, forms part of the ribosomal stalk which helps the ribosome interact with GTP-bound translation factors. The chain is Large ribosomal subunit protein uL11 from Paracoccus denitrificans (strain Pd 1222).